A 216-amino-acid chain; its full sequence is Redox-sensing transcriptional repressor Rex (216 aa).

The H-T-H motif DNA-binding region spans 17-56; it reads IYFRYLTFLHDAGTDRISSAELSDAIKFDAATIRRDFSYF. Residue 91 to 96 coordinates NAD(+); that stretch reads GAGNLG.

The protein belongs to the transcriptional regulatory Rex family. As to quaternary structure, homodimer.

The protein resides in the cytoplasm. Functionally, modulates transcription in response to changes in cellular NADH/NAD(+) redox state. This Leuconostoc citreum (strain KM20) protein is Redox-sensing transcriptional repressor Rex.